Here is a 405-residue protein sequence, read N- to C-terminus: Probable tRNA sulfurtransferase (405 aa).

The region spanning Q60–E165 is the THUMP domain. Residues M183–L184, H208–F209, R265, G287, and Q296 each bind ATP.

It belongs to the ThiI family.

The protein resides in the cytoplasm. It catalyses the reaction [ThiI sulfur-carrier protein]-S-sulfanyl-L-cysteine + a uridine in tRNA + 2 reduced [2Fe-2S]-[ferredoxin] + ATP + H(+) = [ThiI sulfur-carrier protein]-L-cysteine + a 4-thiouridine in tRNA + 2 oxidized [2Fe-2S]-[ferredoxin] + AMP + diphosphate. It carries out the reaction [ThiS sulfur-carrier protein]-C-terminal Gly-Gly-AMP + S-sulfanyl-L-cysteinyl-[cysteine desulfurase] + AH2 = [ThiS sulfur-carrier protein]-C-terminal-Gly-aminoethanethioate + L-cysteinyl-[cysteine desulfurase] + A + AMP + 2 H(+). Its pathway is cofactor biosynthesis; thiamine diphosphate biosynthesis. Its function is as follows. Catalyzes the ATP-dependent transfer of a sulfur to tRNA to produce 4-thiouridine in position 8 of tRNAs, which functions as a near-UV photosensor. Also catalyzes the transfer of sulfur to the sulfur carrier protein ThiS, forming ThiS-thiocarboxylate. This is a step in the synthesis of thiazole, in the thiamine biosynthesis pathway. The sulfur is donated as persulfide by IscS. The polypeptide is Probable tRNA sulfurtransferase (Streptococcus suis (strain 98HAH33)).